A 172-amino-acid polypeptide reads, in one-letter code: Large ribosomal subunit protein uL10 (172 aa).

The protein belongs to the universal ribosomal protein uL10 family. Part of the ribosomal stalk of the 50S ribosomal subunit. The N-terminus interacts with L11 and the large rRNA to form the base of the stalk. The C-terminus forms an elongated spine to which L12 dimers bind in a sequential fashion forming a multimeric L10(L12)X complex.

Functionally, forms part of the ribosomal stalk, playing a central role in the interaction of the ribosome with GTP-bound translation factors. This Francisella tularensis subsp. holarctica (strain FTNF002-00 / FTA) protein is Large ribosomal subunit protein uL10.